The sequence spans 305 residues: NAD kinase (305 aa).

Residue aspartate 84 is the Proton acceptor of the active site. NAD(+) is bound by residues 84–85 (DG), 159–160 (NE), histidine 170, arginine 187, aspartate 189, 200–205 (TAYSLS), and glutamine 260.

Belongs to the NAD kinase family. The cofactor is a divalent metal cation.

It is found in the cytoplasm. The catalysed reaction is NAD(+) + ATP = ADP + NADP(+) + H(+). Involved in the regulation of the intracellular balance of NAD and NADP, and is a key enzyme in the biosynthesis of NADP. Catalyzes specifically the phosphorylation on 2'-hydroxyl of the adenosine moiety of NAD to yield NADP. This chain is NAD kinase, found in Pasteurella multocida (strain Pm70).